The chain runs to 44 residues: Antibacterial protein 2 homolog (44 aa).

The protein belongs to the staphylococcal hemolytic protein family.

The protein resides in the secreted. Has hemolytic activity and also inhibits the growth of gonococci. The polypeptide is Antibacterial protein 2 homolog (Staphylococcus haemolyticus (strain JCSC1435)).